A 429-amino-acid chain; its full sequence is Glutamate-1-semialdehyde 2,1-aminomutase (429 aa).

An N6-(pyridoxal phosphate)lysine modification is found at K267.

This sequence belongs to the class-III pyridoxal-phosphate-dependent aminotransferase family. HemL subfamily. In terms of assembly, homodimer. Pyridoxal 5'-phosphate serves as cofactor.

It localises to the cytoplasm. It carries out the reaction (S)-4-amino-5-oxopentanoate = 5-aminolevulinate. It functions in the pathway porphyrin-containing compound metabolism; protoporphyrin-IX biosynthesis; 5-aminolevulinate from L-glutamyl-tRNA(Glu): step 2/2. The sequence is that of Glutamate-1-semialdehyde 2,1-aminomutase from Anaeromyxobacter sp. (strain Fw109-5).